The sequence spans 498 residues: Putative BTB/POZ domain-containing protein L67 (498 aa).

In terms of domain architecture, BTB spans 26 to 96 (SDINITLSDN…MYGISLSEIN (71 aa)).

Belongs to the mimivirus BTB/WD family.

This is Putative BTB/POZ domain-containing protein L67 from Acanthamoeba polyphaga (Amoeba).